The primary structure comprises 876 residues: AP-5 complex subunit beta-1 (876 aa).

Probably part of the adaptor protein complex 5 (AP-5), a tetramer composed of AP5B1, AP5M1, AP5S1 and AP5Z1. Interacts with ZFYVE26 and SPG11.

Its function is as follows. As part of AP-5, a probable fifth adaptor protein complex, it may be involved in endosomal transport. The chain is AP-5 complex subunit beta-1 (Ap5b1) from Rattus norvegicus (Rat).